A 71-amino-acid polypeptide reads, in one-letter code: uncharacterized protein (71 aa).

This is an uncharacterized protein from Acheta domesticus (House cricket).